Consider the following 131-residue polypeptide: Small ribosomal subunit protein uS8 (131 aa).

Belongs to the universal ribosomal protein uS8 family. In terms of assembly, part of the 30S ribosomal subunit. Contacts proteins S5 and S12.

One of the primary rRNA binding proteins, it binds directly to 16S rRNA central domain where it helps coordinate assembly of the platform of the 30S subunit. This chain is Small ribosomal subunit protein uS8, found in Helicobacter acinonychis (strain Sheeba).